The following is a 3255-amino-acid chain: Genome polyprotein (3255 aa).

Positions 292 to 437 (VMNQQTLTAL…HTLTHRMVQY (146 aa)) constitute a Peptidase S30 domain. Catalysis depends on for P1 proteinase activity residues histidine 345, aspartate 354, and serine 388. The Involved in interaction with stylet and aphid transmission motif lies at 489 to 492 (KITC). An Involved in virions binding and aphid transmission motif is present at residues 747–749 (PTK). The 123-residue stretch at 773–895 (MFVAKDGYCY…ESEMQHYRVG (123 aa)) folds into the Peptidase C6 domain. Catalysis depends on for helper component proteinase activity residues cysteine 781 and histidine 854. A Helicase ATP-binding domain is found at 1397–1549 (EIAHNEYRDI…PMHMVDITTE (153 aa)). 1410–1417 (GGVGSGKS) provides a ligand contact to ATP. The DECH box signature appears at 1499 to 1502 (DECH). In terms of domain architecture, Helicase C-terminal spans 1568–1727 (DATKKGDNIL…GLPVMTSNVS (160 aa)). Residues 2062 to 2069 (EKGKKSGK) carry the Nuclear localization signal motif. Tyrosine 2084 carries the post-translational modification O-(5'-phospho-RNA)-tyrosine. One can recognise a Peptidase C4 domain in the interval 2215–2433 (SKTLFRGLRD…MVWGGINLIN (219 aa)). Active-site for nuclear inclusion protein A activity residues include histidine 2260, aspartate 2295, and cysteine 2365. The region spanning 2699–2823 (WVYCDADGSQ…AIKPEYESLL (125 aa)) is the RdRp catalytic domain. The interval 2980–3027 (TKLDAGQGSKNDDKQKSSADSKDNVITEKGSGSGQVRKDDDINAGLHG) is disordered. Basic and acidic residues predominate over residues 2989–3005 (KNDDKQKSSADSKDNVI).

The protein belongs to the potyviridae genome polyprotein family. Interacts with host eIF4E protein (via cap-binding region); this interaction mediates the translation of the VPg-viral RNA conjugates. Part of a complex that comprises VPg, RNA, host EIF4E and EIF4G; this interaction mediates the translation of the VPg-viral RNA conjugates. Post-translationally, VPg is uridylylated by the polymerase and is covalently attached to the 5'-end of the genomic RNA. This uridylylated form acts as a nucleotide-peptide primer for the polymerase. Potyviral RNA is expressed as two polyproteins which undergo post-translational proteolytic processing. Genome polyprotein is processed by NIa-pro, P1 and HC-pro proteinases resulting in the production of at least ten individual proteins. P3N-PIPO polyprotein is cleaved by P1 and HC-pro proteinases resulting in the production of three individual proteins. The P1 proteinase and the HC-pro cleave only their respective C-termini autocatalytically. 6K1 is essential for proper proteolytic separation of P3 from CI.

Its subcellular location is the host cytoplasmic vesicle. The protein localises to the host nucleus. It is found in the virion. The catalysed reaction is RNA(n) + a ribonucleoside 5'-triphosphate = RNA(n+1) + diphosphate. It catalyses the reaction Hydrolyzes glutaminyl bonds, and activity is further restricted by preferences for the amino acids in P6 - P1' that vary with the species of potyvirus, e.g. Glu-Xaa-Xaa-Tyr-Xaa-Gln-|-(Ser or Gly) for the enzyme from tobacco etch virus. The natural substrate is the viral polyprotein, but other proteins and oligopeptides containing the appropriate consensus sequence are also cleaved.. The enzyme catalyses Hydrolyzes a Gly-|-Gly bond at its own C-terminus, commonly in the sequence -Tyr-Xaa-Val-Gly-|-Gly, in the processing of the potyviral polyprotein.. Required for aphid transmission and also has proteolytic activity. Only cleaves a Gly-Gly dipeptide at its own C-terminus. Interacts with virions and aphid stylets. Acts as a suppressor of RNA-mediated gene silencing, also known as post-transcriptional gene silencing (PTGS), a mechanism of plant viral defense that limits the accumulation of viral RNAs. May have RNA-binding activity. Its function is as follows. Has helicase activity. It may be involved in replication. Functionally, indispensable for virus replication. In terms of biological role, mediates the cap-independent, EIF4E-dependent translation of viral genomic RNAs. Binds to the cap-binding site of host EIF4E and thus interferes with the host EIF4E-dependent mRNA export and translation. VPg-RNA directly binds EIF4E and is a template for transcription. Also forms trimeric complexes with EIF4E-EIF4G, which are templates for translation. Has RNA-binding and proteolytic activities. Its function is as follows. An RNA-dependent RNA polymerase that plays an essential role in the virus replication. Functionally, involved in aphid transmission, cell-to-cell and systemis movement, encapsidation of the viral RNA and in the regulation of viral RNA amplification. This is Genome polyprotein from Lettuce mosaic virus (strain E) (LMV).